We begin with the raw amino-acid sequence, 122 residues long: Prefoldin subunit 1 (122 aa).

Position 2 is an N-acetylalanine (Ala-2).

This sequence belongs to the prefoldin subunit beta family. In terms of assembly, heterohexamer of two PFD-alpha type and four PFD-beta type subunits.

Its function is as follows. Binds specifically to cytosolic chaperonin (c-CPN) and transfers target proteins to it. Binds to nascent polypeptide chain and promotes folding in an environment in which there are many competing pathways for nonnative proteins. This chain is Prefoldin subunit 1 (PFDN1), found in Homo sapiens (Human).